The sequence spans 284 residues: Diaminopimelate epimerase (284 aa).

The substrate site is built by Asn21, Gln54, and Asn74. Cys83 (proton donor) is an active-site residue. Substrate contacts are provided by residues 84-85, Asn167, Asn200, and 218-219; these read GN and ER. Residue Cys227 is the Proton acceptor of the active site. 228 to 229 lines the substrate pocket; the sequence is GS.

Belongs to the diaminopimelate epimerase family. As to quaternary structure, homodimer.

The protein resides in the cytoplasm. It catalyses the reaction (2S,6S)-2,6-diaminopimelate = meso-2,6-diaminopimelate. It functions in the pathway amino-acid biosynthesis; L-lysine biosynthesis via DAP pathway; DL-2,6-diaminopimelate from LL-2,6-diaminopimelate: step 1/1. Catalyzes the stereoinversion of LL-2,6-diaminopimelate (L,L-DAP) to meso-diaminopimelate (meso-DAP), a precursor of L-lysine and an essential component of the bacterial peptidoglycan. This is Diaminopimelate epimerase from Buchnera aphidicola subsp. Acyrthosiphon pisum (strain 5A).